We begin with the raw amino-acid sequence, 827 residues long: Protein Jade-1 (827 aa).

The disordered stretch occupies residues 1–35 (MKRVCLPSSSEDSDDNGSLSTSWSQHSRSLPSFRH). Residues 16-30 (NGSLSTSWSQHSRSL) are compositionally biased toward polar residues. A PHD-type 1 zinc finger spans residues 200–250 (DVVCDVCQSPDGEDGNEMVFCDKCNICVHQACYGILKVPEGSWLCRTCALG). A C2HC pre-PHD-type zinc finger spans residues 252–286 (QPKCLLCPKKGGAMKPTRSGTKWVHVSCALWIPEV). The PHD-type 2 zinc finger occupies 310-366 (LLCSLCNEKVGACIQCSIKNCRTAFHVTCAFDHGLEMKTILTQEDEVKFKSYCPKHG). Disordered stretches follow at residues 622 to 705 (TVAK…SSSL) and 769 to 810 (RTKE…SSSS). 2 stretches are compositionally biased toward basic and acidic residues: residues 646 to 661 (SRTQGDTKFDSKEKPL) and 669 to 682 (KHTEPPERPAEKKR). The segment covering 692 to 705 (ATASSNKKQCSSSL) has biased composition (polar residues).

It belongs to the JADE family. Component of the HBO1 complex composed.

It localises to the nucleus. The protein resides in the chromosome. The protein localises to the cytoplasm. It is found in the cytoskeleton. Its subcellular location is the cilium basal body. In terms of biological role, scaffold subunit of some HBO1 complexes, which have a histone H4 acetyltransferase activity. Plays a key role in HBO1 complex by directing KAT7/HBO1 specificity towards histone H4 acetylation (H4K5ac, H4K8ac and H4K12ac), regulating DNA replication initiation, regulating DNA replication initiation. This chain is Protein Jade-1 (jade1), found in Xenopus laevis (African clawed frog).